We begin with the raw amino-acid sequence, 324 residues long: Coproporphyrin III ferrochelatase (324 aa).

The Fe(2+) site is built by H184 and E266.

Belongs to the ferrochelatase family.

The protein resides in the cytoplasm. The enzyme catalyses Fe-coproporphyrin III + 2 H(+) = coproporphyrin III + Fe(2+). It participates in porphyrin-containing compound metabolism; protoheme biosynthesis. Functionally, involved in coproporphyrin-dependent heme b biosynthesis. Catalyzes the insertion of ferrous iron into coproporphyrin III to form Fe-coproporphyrin III. The protein is Coproporphyrin III ferrochelatase of Lactiplantibacillus plantarum (strain ATCC BAA-793 / NCIMB 8826 / WCFS1) (Lactobacillus plantarum).